The sequence spans 146 residues: D-aminoacyl-tRNA deacylase (146 aa).

A Gly-cisPro motif, important for rejection of L-amino acids motif is present at residues 137–138; the sequence is GP.

Belongs to the DTD family. As to quaternary structure, homodimer.

The protein localises to the cytoplasm. The catalysed reaction is glycyl-tRNA(Ala) + H2O = tRNA(Ala) + glycine + H(+). It carries out the reaction a D-aminoacyl-tRNA + H2O = a tRNA + a D-alpha-amino acid + H(+). An aminoacyl-tRNA editing enzyme that deacylates mischarged D-aminoacyl-tRNAs. Also deacylates mischarged glycyl-tRNA(Ala), protecting cells against glycine mischarging by AlaRS. Acts via tRNA-based rather than protein-based catalysis; rejects L-amino acids rather than detecting D-amino acids in the active site. By recycling D-aminoacyl-tRNA to D-amino acids and free tRNA molecules, this enzyme counteracts the toxicity associated with the formation of D-aminoacyl-tRNA entities in vivo and helps enforce protein L-homochirality. The chain is D-aminoacyl-tRNA deacylase from Bacillus cytotoxicus (strain DSM 22905 / CIP 110041 / 391-98 / NVH 391-98).